The chain runs to 78 residues: Small ribosomal subunit protein bS18 (78 aa).

This sequence belongs to the bacterial ribosomal protein bS18 family. As to quaternary structure, part of the 30S ribosomal subunit. Forms a tight heterodimer with protein bS6.

Its function is as follows. Binds as a heterodimer with protein bS6 to the central domain of the 16S rRNA, where it helps stabilize the platform of the 30S subunit. This chain is Small ribosomal subunit protein bS18, found in Acidothermus cellulolyticus (strain ATCC 43068 / DSM 8971 / 11B).